The sequence spans 982 residues: Protein phosphatase 1 regulatory subunit 12B (982 aa).

The segment covering 1–24 (MAELEHLGGKRAESARMRRAEQLR) has biased composition (basic and acidic residues). The tract at residues 1–50 (MAELEHLGGKRAESARMRRAEQLRRWRGSLTEQEPAERRGAGRQPLTRRG) is disordered. S29 carries the post-translational modification Phosphoserine. 5 ANK repeats span residues 57-86 (EDGA…DINT), 90-119 (DGLT…NVNQ), 123-152 (EGWT…SVGI), 216-245 (SGAT…ELNV), and 249-278 (DGWT…DMDI). Disordered regions lie at residues 342-517 (EETP…RESA), 556-579 (RTPH…SSTP), 606-864 (TDSS…EARE), and 918-948 (AQQK…KMSE). Residues 362 to 374 (SEEEEGEDEASES) show a composition bias toward acidic residues. A compositionally biased stretch (basic and acidic residues) spans 375–385 (ETEKEADKKPE). Residues 389–401 (NHSNSESKSSITE) show a composition bias toward polar residues. Positions 411 to 421 (FSASSARRFSS) are enriched in low complexity. T445 bears the Phosphothreonine mark. Low complexity predominate over residues 466–478 (SSIYRSSSSPRIS). Basic and acidic residues predominate over residues 482-491 (DNKDKERENK). Over residues 623–632 (VRDEEAESLR) the composition is skewed to basic and acidic residues. Positions 633–643 (KARSRQARQTR) are enriched in basic residues. T646 is subject to Phosphothreonine. The span at 656–680 (EAERTFSRSRAERQAQEQPREKPTD) shows a compositional bias: basic and acidic residues. The segment covering 731–742 (TTPASPSTSRPS) has biased composition (low complexity). The segment covering 743-755 (LYTSSHLLWTNRF) has biased composition (polar residues). Positions 797–807 (ERRRPKERRRG) are enriched in basic residues. T808 carries the phosphothreonine modification. A compositionally biased stretch (basic and acidic residues) spans 824 to 836 (EEVKETWHERLSR). S839 carries the phosphoserine modification. A compositionally biased stretch (polar residues) spans 840 to 849 (GGSNPTTSDS). Composition is skewed to basic and acidic residues over residues 850–864 (YGDR…EARE), 918–927 (AQQKQEKTSD), and 933–948 (EMEK…KMSE). At S947 the chain carries Phosphoserine.

PP1 comprises a catalytic subunit, PPP1CA, PPP1CB or PPP1CC, and one or several targeting or regulatory subunits. PPP1R12B mediates binding to myosin. Isoform 3 and isoform 4 bind PPP1R12A, but not isoform 1 of PPP1R12B itself. Binds IL16. Detected in skeletal muscle, fetal and adult heart, brain, placenta, kidney, spleen, thymus, pancreas and lung. Isoform 3 and isoform 4 are heart specific.

The protein localises to the cytoplasm. The protein resides in the cytoskeleton. It is found in the stress fiber. In terms of biological role, regulates myosin phosphatase activity. Augments Ca(2+) sensitivity of the contractile apparatus. This is Protein phosphatase 1 regulatory subunit 12B (PPP1R12B) from Homo sapiens (Human).